The following is a 431-amino-acid chain: Tol-Pal system protein TolB (431 aa).

An N-terminal signal peptide occupies residues 1–26 (MSLMTKLGFRALVASCLITAGSAANA). The segment at 406 to 431 (DGSAPPQILSVQGGSVREPSWGPFMQ) is disordered.

Belongs to the TolB family. The Tol-Pal system is composed of five core proteins: the inner membrane proteins TolA, TolQ and TolR, the periplasmic protein TolB and the outer membrane protein Pal. They form a network linking the inner and outer membranes and the peptidoglycan layer.

It is found in the periplasm. Its function is as follows. Part of the Tol-Pal system, which plays a role in outer membrane invagination during cell division and is important for maintaining outer membrane integrity. The sequence is that of Tol-Pal system protein TolB from Burkholderia orbicola (strain AU 1054).